Consider the following 132-residue polypeptide: Large ribosomal subunit protein uL14 (132 aa).

Belongs to the universal ribosomal protein uL14 family. Part of the 50S ribosomal subunit. Forms a cluster with proteins L3 and L24e, part of which may contact the 16S rRNA in 2 intersubunit bridges.

Its function is as follows. Binds to 23S rRNA. Forms part of two intersubunit bridges in the 70S ribosome. This Archaeoglobus fulgidus (strain ATCC 49558 / DSM 4304 / JCM 9628 / NBRC 100126 / VC-16) protein is Large ribosomal subunit protein uL14.